Reading from the N-terminus, the 109-residue chain is UPF0482 protein ESA_01750 (109 aa).

The N-terminal stretch at 1 to 24 (MNKFLRHSLLLALLTGALSGVANA) is a signal peptide. Residues 38 to 55 (RTRQDAAMDKEQWNDTRS) show a composition bias toward basic and acidic residues. A disordered region spans residues 38–63 (RTRQDAAMDKEQWNDTRSLRQKVNKR).

This sequence belongs to the UPF0482 family.

This chain is UPF0482 protein ESA_01750, found in Cronobacter sakazakii (strain ATCC BAA-894) (Enterobacter sakazakii).